The following is a 339-amino-acid chain: GTPase Obg (339 aa).

In terms of domain architecture, Obg spans 1-159 (MKFVDEAFVR…RELKLELKLL (159 aa)). The OBG-type G domain maps to 160 to 333 (ADVGLLGLPN…LCYDLMSFLE (174 aa)). Residues 166-173 (GLPNAGKS), 191-195 (FTTLY), 213-216 (DIPG), 283-286 (NKID), and 314-316 (SAI) each bind GTP. Mg(2+) is bound by residues Ser173 and Thr193.

The protein belongs to the TRAFAC class OBG-HflX-like GTPase superfamily. OBG GTPase family. Monomer. It depends on Mg(2+) as a cofactor.

The protein resides in the cytoplasm. An essential GTPase which binds GTP, GDP and possibly (p)ppGpp with moderate affinity, with high nucleotide exchange rates and a fairly low GTP hydrolysis rate. Plays a role in control of the cell cycle, stress response, ribosome biogenesis and in those bacteria that undergo differentiation, in morphogenesis control. The sequence is that of GTPase Obg from Coxiella burnetii (strain RSA 331 / Henzerling II).